The sequence spans 686 residues: Probable metal-nicotianamine transporter YSL4 (686 aa).

Helical transmembrane passes span 27–47 (WLVT…FCFV), 53–73 (MMTG…FFLL), 96–116 (MFLI…GFAT), 151–171 (FFLI…IMII), 203–223 (VMTI…QWFY), 264–284 (IVNF…YPYL), 308–328 (VFIS…ILVT), 373–393 (IPMF…MVAM), 405–425 (VGVL…ATGL), 441–461 (IFAA…VSGI), 488–508 (AMIA…PCIF), 554–574 (CVEL…LVLV), 596–616 (FFAG…LLLW), and 629–649 (AAVA…SALL).

It belongs to the YSL (TC 2.A.67.2) family.

It localises to the membrane. In terms of biological role, may be involved in the transport of nicotianamine-chelated metals. This is Probable metal-nicotianamine transporter YSL4 (YSL4) from Oryza sativa subsp. japonica (Rice).